Reading from the N-terminus, the 492-residue chain is V-type proton ATPase subunit B 2 (492 aa).

The protein belongs to the ATPase alpha/beta chains family. V-ATPase is a heteromultimeric enzyme composed of a peripheral catalytic V1 complex (main components: subunits A, B, C, D, E, and F) attached to an integral membrane V0 proton pore complex (main component: the proteolipid protein).

Its function is as follows. Non-catalytic subunit of the peripheral V1 complex of vacuolar ATPase. V-ATPase is responsible for acidifying a variety of intracellular compartments in eukaryotic cells. In Acetabularia acetabulum (Mermaid's wine glass), this protein is V-type proton ATPase subunit B 2.